The chain runs to 416 residues: Enolase (416 aa).

Q156 serves as a coordination point for (2R)-2-phosphoglycerate. The active-site Proton donor is E200. Residues D236, E281, and D308 each contribute to the Mg(2+) site. Residues K333, R362, S363, and K384 each contribute to the (2R)-2-phosphoglycerate site. K333 acts as the Proton acceptor in catalysis.

It belongs to the enolase family. It depends on Mg(2+) as a cofactor.

Its subcellular location is the cytoplasm. It localises to the secreted. The protein resides in the cell surface. It catalyses the reaction (2R)-2-phosphoglycerate = phosphoenolpyruvate + H2O. It functions in the pathway carbohydrate degradation; glycolysis; pyruvate from D-glyceraldehyde 3-phosphate: step 4/5. In terms of biological role, catalyzes the reversible conversion of 2-phosphoglycerate (2-PG) into phosphoenolpyruvate (PEP). It is essential for the degradation of carbohydrates via glycolysis. This Methanothermobacter thermautotrophicus (strain ATCC 29096 / DSM 1053 / JCM 10044 / NBRC 100330 / Delta H) (Methanobacterium thermoautotrophicum) protein is Enolase.